Consider the following 207-residue polypeptide: Proteasome subunit beta (207 aa).

Residues 1–7 constitute a propeptide, removed in mature form; by autocatalysis; sequence MVEAFKG. Residue threonine 8 is the Nucleophile of the active site.

This sequence belongs to the peptidase T1B family. The 20S proteasome core is composed of 14 alpha and 14 beta subunits that assemble into four stacked heptameric rings, resulting in a barrel-shaped structure. The two inner rings, each composed of seven catalytic beta subunits, are sandwiched by two outer rings, each composed of seven alpha subunits. The catalytic chamber with the active sites is on the inside of the barrel. Has a gated structure, the ends of the cylinder being occluded by the N-termini of the alpha-subunits. Is capped at one or both ends by the proteasome regulatory ATPase, PAN.

The protein localises to the cytoplasm. It catalyses the reaction Cleavage of peptide bonds with very broad specificity.. Its activity is regulated as follows. The formation of the proteasomal ATPase PAN-20S proteasome complex, via the docking of the C-termini of PAN into the intersubunit pockets in the alpha-rings, triggers opening of the gate for substrate entry. Interconversion between the open-gate and close-gate conformations leads to a dynamic regulation of the 20S proteasome proteolysis activity. Functionally, component of the proteasome core, a large protease complex with broad specificity involved in protein degradation. The polypeptide is Proteasome subunit beta (Methanothrix thermoacetophila (strain DSM 6194 / JCM 14653 / NBRC 101360 / PT) (Methanosaeta thermophila)).